A 182-amino-acid polypeptide reads, in one-letter code: Large ribosomal subunit protein uL6 (182 aa).

It belongs to the universal ribosomal protein uL6 family. In terms of assembly, part of the 50S ribosomal subunit.

In terms of biological role, this protein binds to the 23S rRNA, and is important in its secondary structure. It is located near the subunit interface in the base of the L7/L12 stalk, and near the tRNA binding site of the peptidyltransferase center. This is Large ribosomal subunit protein uL6 from Haloquadratum walsbyi (strain DSM 16790 / HBSQ001).